A 616-amino-acid polypeptide reads, in one-letter code: Xaa-Pro aminopeptidase app-1 (616 aa).

Arg-78 and His-392 together coordinate a peptide. Residues Asp-413, Asp-424, and His-487 each contribute to the Zn(2+) site. A peptide is bound by residues His-487, His-496, and Glu-522. Positions 522 and 536 each coordinate Zn(2+).

This sequence belongs to the peptidase M24B family. Homodimer. May interact with pid-2, pid-4 and pid-5. Zn(2+) is required as a cofactor. As to expression, specifically expressed in the intestine.

The protein localises to the cytoplasm. It carries out the reaction Release of any N-terminal amino acid, including proline, that is linked to proline, even from a dipeptide or tripeptide.. Strongly inhibited by the metal ion chelators EDTA and 1,10-phenanthroline. Also inhibited by apstatin. Activity towards bradykinin is inhibited by Mn(2+) and Zn(2+) at all concentrations tested, whereas Co(2+) is inhibitory at concentrations above 100 uM and activatory at 10 uM. In terms of biological role, catalyzes the removal of a penultimate prolyl residue from the N-termini of peptides, such as Arg-Pro-Pro. Has activity towards the flp-9 neuropeptide KPSFVRF-amide. The polypeptide is Xaa-Pro aminopeptidase app-1 (Caenorhabditis elegans).